A 650-amino-acid polypeptide reads, in one-letter code: uncharacterized protein (650 aa).

This is an uncharacterized protein from Caenorhabditis elegans.